Consider the following 273-residue polypeptide: uncharacterized protein (273 aa).

The chain crosses the membrane as a helical span at residues 7–27 (LTLGICLVLLIILIVGYVIMT).

Belongs to the staphylococcal tandem lipoprotein family.

The protein localises to the cell membrane. This is an uncharacterized protein from Staphylococcus aureus (strain MSSA476).